A 382-amino-acid chain; its full sequence is Galactokinase (382 aa).

Position 34 to 37 (34 to 37 (EHTD)) interacts with substrate. An ATP-binding site is contributed by 124-130 (GAGLSSS). Residues S130 and E162 each contribute to the Mg(2+) site. The active-site Proton acceptor is the D174. Position 223 (Y223) interacts with substrate.

The protein belongs to the GHMP kinase family. GalK subfamily.

It localises to the cytoplasm. It catalyses the reaction alpha-D-galactose + ATP = alpha-D-galactose 1-phosphate + ADP + H(+). Its pathway is carbohydrate metabolism; galactose metabolism. In terms of biological role, catalyzes the transfer of the gamma-phosphate of ATP to D-galactose to form alpha-D-galactose-1-phosphate (Gal-1-P). This Shigella boydii serotype 4 (strain Sb227) protein is Galactokinase.